The following is a 120-amino-acid chain: UPF0231 protein YacL (120 aa).

The protein belongs to the UPF0231 family.

This is UPF0231 protein YacL from Salmonella heidelberg (strain SL476).